Consider the following 91-residue polypeptide: MVKIRLARGGAKKKPFYLIVATDSRKRRDSGYYIERLGYFNPVAHGQEVRLTIEKDRFAYWTSKGAQISDRVKQLVKEFKDPSIYEKRVAT.

This sequence belongs to the bacterial ribosomal protein bS16 family.

The polypeptide is Small ribosomal subunit protein bS16 (Ruthia magnifica subsp. Calyptogena magnifica).